The primary structure comprises 373 residues: Lipoyl amidotransferase LIPT1, mitochondrial (373 aa).

A mitochondrion-targeting transit peptide spans 1–25 (MLIPFSMKNCFQLLCNCQVPAAGFK). The BPL/LPL catalytic domain occupies 57-243 (LEGKPILFFW…EYAAYHQIDN (187 aa)). Positions 107, 151, 161, and 179 each coordinate (R)-lipoyl-5'-AMP.

The protein belongs to the LplA family. As to expression, highly expressed in skeletal muscle and heart, moderately in kidney and pancreas, and detected at lower levels in liver, brain, placenta and lung.

Its subcellular location is the mitochondrion. It catalyses the reaction N(6)-[(R)-lipoyl]-L-lysyl-[glycine-cleavage complex H protein] + L-lysyl-[lipoyl-carrier protein] = L-lysyl-[glycine-cleavage complex H protein] + N(6)-[(R)-lipoyl]-L-lysyl-[lipoyl-carrier protein]. The catalysed reaction is (R)-lipoyl-5'-AMP + L-lysyl-[lipoyl-carrier protein] = N(6)-[(R)-lipoyl]-L-lysyl-[lipoyl-carrier protein] + AMP + 2 H(+). The protein operates within protein modification; protein lipoylation via exogenous pathway; protein N(6)-(lipoyl)lysine from lipoate: step 2/2. Lipoyl amidotransferase that catalyzes the transfer of lipoyl moieties from lipoyl-protein H of the glycine cleavage system (lipoyl-GCSH) to E2 subunits of the pyruvate dehydrogenase complex (PDCE2). Unable to catalyze the transfer of octanoyl from octanoyl-GCSH to PDCE2. In vitro, it is also able to catalyze the transfer of the lipoyl group from lipoyl-AMP to the specific lysine residue of lipoyl domains of lipoate-dependent enzymes but this reaction may not be physiologically relevant. The protein is Lipoyl amidotransferase LIPT1, mitochondrial of Homo sapiens (Human).